A 1071-amino-acid chain; its full sequence is MAGAIENARKEIKRISLEDHAESEYGAIYSVSGPVVIAENMIGCAMYELVKVGHDNLVGEVIRIDGDKATIQVYEETAGLTVGDPVLRTGKPLSVELGPGLMETIYDGIQRPLKAIKEESQSIYIPRGIDTPALDRTIKWQFTPGKFQVGDHISGGDIYGSVFENSLISSHKILLPPRSRGTITWIAPAGEYTLDEKILEVEFDGKKSDFTLYHTWPVRVPRPVTEKLSADYPLLTGQRVLDALFPCVQGGTTCIPGAFGCGKTVISQSLSKYSNSDAIIYVGCFAKGTNVLMADGSIECIENIEVGNKVMGKDGRPREVIKLPRGRETMYSVVQKSQHRAHKSDSSREVPELLKFTCNATHELVVRTPRSVRRLSRTIKGVEYFEVITFEMGQKKAPDGRIVELVKEVSKSYPISEGPERANELVESYRKASNKAYFEWTIEARDLSLLGSHVRKATYQTYAPILYENDHFFDYMQKSKFHLTIEGPKVLAYLLGLWIGDGLSDRATFSVDSRDTSLMERVTEYAEKLNLCAEYKDRKEPQVAKTVNLYSKVVRGNGIRNNLNTENPLWDAIVGLGFLKDGVKNIPSFLSTDNIGTRETFLAGLIDSDGYVTDEHGIKATIKTIHTSVRDGLVSLARSLGLVVSVNAEPAKVDMNGTKHKISYAIYMSGGDVLLNVLSKCAGSKKFRPAPAAAFARECRGFYFELQELKEDDYYGITLSDDSDHQFLLANQVVVHNCGERGNEMAEVLMEFPELYTEMSGTKEPIMKRTTLVANTSNMPVAAREASIYTGITLAEYFRDQGKNVSMIADSSSRWAEALREISGRLGEMPADQGFPAYLGAKLASFYERAGKAVALGSPDRTGSVSIVAAVSPAGGDFSDPVTTATLGITQVFWGLDKKLAQRKHFPSINTSVSYSKYTNVLNKFYDSNYPEFPVLRDRMKEILSNAEELEQVVQLVGKSALSDSDKITLDVATLIKEDFLQQNGYSTYDAFCPIWKTFDMMRAFISYHDEAQKAVANGANWSKLADSTGDVKHAVSSSKFFEPSRGEKEVHGEFEKLLSTMQERFAESTD.

Ala2 bears the N-acetylalanine mark. Phosphothreonine is present on Thr131. 257–264 provides a ligand contact to ATP; sequence GAFGCGKT. One can recognise a DOD-type homing endonuclease domain in the interval 494 to 642; the sequence is LLGLWIGDGL…LVSLARSLGL (149 aa). 2 positions are modified to phosphoserine: Ser858 and Ser928.

This sequence belongs to the ATPase alpha/beta chains family. As to quaternary structure, V-ATPase is a heteromultimeric enzyme composed of a peripheral catalytic V1 complex (components A to H) attached to an integral membrane V0 proton pore complex (components: a, c, c', c'', d, e, f and VOA1). Interacts with RAV1 and RAV2 components of the RAVE complex, which are essential for the stability and assembly of V-ATPase. In terms of processing, this protein undergoes a protein self splicing that involves a post-translational excision of the VDE intervening region (intein) followed by peptide ligation.

It is found in the vacuole membrane. It carries out the reaction ATP + H2O + 4 H(+)(in) = ADP + phosphate + 5 H(+)(out). Functionally, catalytic subunit of the V1 complex of vacuolar(H+)-ATPase (V-ATPase), a multisubunit enzyme composed of a peripheral complex (V1) that hydrolyzes ATP and a membrane integral complex (V0) that translocates protons. V-ATPase is responsible for acidifying and maintaining the pH of intracellular compartments. In terms of biological role, PI-SceI is an endonuclease that can cleave at a site present in a VMA1 allele that lacks the derived endonuclease segment of the open reading frame; cleavage at this site only occurs during meiosis and initiates 'homing', a genetic event that converts a VMA1 allele lacking VDE into one that contains it. This is V-type proton ATPase catalytic subunit A from Saccharomyces cerevisiae (strain ATCC 204508 / S288c) (Baker's yeast).